Consider the following 400-residue polypeptide: Phosphoglycerate kinase (400 aa).

Substrate contacts are provided by residues 20-22 (DLN), R35, 58-61 (HQGR), R115, and R155. Residues E330 and 356–359 (GGDT) contribute to the ATP site.

It belongs to the phosphoglycerate kinase family. As to quaternary structure, monomer.

It is found in the cytoplasm. It catalyses the reaction (2R)-3-phosphoglycerate + ATP = (2R)-3-phospho-glyceroyl phosphate + ADP. Its pathway is carbohydrate degradation; glycolysis; pyruvate from D-glyceraldehyde 3-phosphate: step 2/5. The protein is Phosphoglycerate kinase of Haloarcula marismortui (strain ATCC 43049 / DSM 3752 / JCM 8966 / VKM B-1809) (Halobacterium marismortui).